The primary structure comprises 181 residues: Large ribosomal subunit protein bL17 (181 aa).

Residues 129-181 (AEKSEKSAKTAKAAKAPAKKATAKKASTKAVAAKKKAVKKAQKKDRAASAARA) are disordered. A compositionally biased stretch (basic residues) spans 145-171 (PAKKATAKKASTKAVAAKKKAVKKAQK).

This sequence belongs to the bacterial ribosomal protein bL17 family. In terms of assembly, part of the 50S ribosomal subunit. Contacts protein L32.

This is Large ribosomal subunit protein bL17 from Bdellovibrio bacteriovorus (strain ATCC 15356 / DSM 50701 / NCIMB 9529 / HD100).